The primary structure comprises 355 residues: MSGQPKRLMVMAGGTGGHVFPGLAVAHHLMAQGWQVRWLGTADRMEADLVPKHGIDIDFIRISGLRGKGVKALLAAPLRIFNAWRQARAIMKRFKPDVVLGMGGYVSGPGGLAAWSLGIPVVLHEQNGIAGLTNQWLAKIATTVMQAFPGAFPNAEVVGNPVRTDVLALPLPQVRLAGRDGPIRVLVVGGSQGARVLNQTMPQVAARLGDTVTIWHQSGKGVQHTVEQAYAGVGQPQHKVTEFIDDMAAAYAWADVVVCRSGALTVSEIAAAGLPAIFVPFQHKDRQQYWNALPLENAGAAKIFEQPQFTVEAVADTLAGWSREALLTMAERARAVSIPDATERVASEVSRVART.

UDP-N-acetyl-alpha-D-glucosamine-binding positions include 15–17 (TGG), N127, R163, S191, I244, 263–268 (ALTVSE), and Q288.

This sequence belongs to the glycosyltransferase 28 family. MurG subfamily.

The protein resides in the cell inner membrane. The enzyme catalyses di-trans,octa-cis-undecaprenyl diphospho-N-acetyl-alpha-D-muramoyl-L-alanyl-D-glutamyl-meso-2,6-diaminopimeloyl-D-alanyl-D-alanine + UDP-N-acetyl-alpha-D-glucosamine = di-trans,octa-cis-undecaprenyl diphospho-[N-acetyl-alpha-D-glucosaminyl-(1-&gt;4)]-N-acetyl-alpha-D-muramoyl-L-alanyl-D-glutamyl-meso-2,6-diaminopimeloyl-D-alanyl-D-alanine + UDP + H(+). The protein operates within cell wall biogenesis; peptidoglycan biosynthesis. In terms of biological role, cell wall formation. Catalyzes the transfer of a GlcNAc subunit on undecaprenyl-pyrophosphoryl-MurNAc-pentapeptide (lipid intermediate I) to form undecaprenyl-pyrophosphoryl-MurNAc-(pentapeptide)GlcNAc (lipid intermediate II). This chain is UDP-N-acetylglucosamine--N-acetylmuramyl-(pentapeptide) pyrophosphoryl-undecaprenol N-acetylglucosamine transferase, found in Salmonella gallinarum (strain 287/91 / NCTC 13346).